We begin with the raw amino-acid sequence, 346 residues long: D-erythrose-4-phosphate dehydrogenase (346 aa).

11–12 serves as a coordination point for NAD(+); it reads RI. Substrate-binding positions include 163 to 165, arginine 209, 222 to 223, and arginine 245; these read SCT and TK. Cysteine 164 (nucleophile) is an active-site residue. Asparagine 327 contributes to the NAD(+) binding site.

This sequence belongs to the glyceraldehyde-3-phosphate dehydrogenase family. Epd subfamily. Homotetramer.

It localises to the cytoplasm. It catalyses the reaction D-erythrose 4-phosphate + NAD(+) + H2O = 4-phospho-D-erythronate + NADH + 2 H(+). It participates in cofactor biosynthesis; pyridoxine 5'-phosphate biosynthesis; pyridoxine 5'-phosphate from D-erythrose 4-phosphate: step 1/5. Its function is as follows. Catalyzes the NAD-dependent conversion of D-erythrose 4-phosphate to 4-phosphoerythronate. The polypeptide is D-erythrose-4-phosphate dehydrogenase (Vibrio vulnificus (strain YJ016)).